A 192-amino-acid polypeptide reads, in one-letter code: Ion-translocating oxidoreductase complex subunit B (192 aa).

Positions 1–26 (MNAIWIAVVAVSLLGLAFGAILGYAS) are hydrophobic. The 4Fe-4S domain occupies 32-91 (EDDPVVEKIDEILPQSQCGQCGYPGCRPYAEAIGSQGEKINRCAPGGEAVMLKIATLLNV). Cys49, Cys52, Cys57, Cys74, Cys117, Cys120, Cys123, Cys127, Cys147, Cys150, Cys153, and Cys157 together coordinate [4Fe-4S] cluster. 4Fe-4S ferredoxin-type domains follow at residues 108 to 137 (MLAV…GATR) and 138 to 167 (AMHT…LRPV).

Belongs to the 4Fe4S bacterial-type ferredoxin family. RnfB subfamily. The complex is composed of six subunits: RnfA, RnfB, RnfC, RnfD, RnfE and RnfG. It depends on [4Fe-4S] cluster as a cofactor.

Its subcellular location is the cell inner membrane. In terms of biological role, part of a membrane-bound complex that couples electron transfer with translocation of ions across the membrane. In Citrobacter koseri (strain ATCC BAA-895 / CDC 4225-83 / SGSC4696), this protein is Ion-translocating oxidoreductase complex subunit B.